A 163-amino-acid polypeptide reads, in one-letter code: Transcriptional repressor NrdR (163 aa).

A disordered region spans residues 1 to 22 (MRCPKCQSLKSSVIDSRQAEDG). Residues 3 to 34 (CPKCQSLKSSVIDSRQAEDGNTIRRRRSCDQC) fold into a zinc finger. The ATP-cone domain maps to 49–139 (LVVVKKDGTR…VYRSFKDVGE (91 aa)).

Belongs to the NrdR family. Zn(2+) serves as cofactor.

Functionally, negatively regulates transcription of bacterial ribonucleotide reductase nrd genes and operons by binding to NrdR-boxes. The polypeptide is Transcriptional repressor NrdR (Streptococcus suis (strain 98HAH33)).